Consider the following 94-residue polypeptide: Large ribosomal subunit protein eL42 (94 aa).

Residues C11, C14, C71, and C74 each coordinate Zn(2+). The C4-type zinc finger occupies 11–74; sequence CPFCKKHTIH…LDLRFRCTEC (64 aa).

The protein belongs to the eukaryotic ribosomal protein eL42 family. Part of the 50S ribosomal subunit. Zn(2+) is required as a cofactor.

Functionally, binds to the 23S rRNA. This chain is Large ribosomal subunit protein eL42, found in Pyrococcus furiosus (strain ATCC 43587 / DSM 3638 / JCM 8422 / Vc1).